Reading from the N-terminus, the 493-residue chain is Cysteine--tRNA ligase (493 aa).

A Zn(2+)-binding site is contributed by C41. The 'HIGH' region signature appears at 43–53 (PTVYNYPHIGN). 3 residues coordinate Zn(2+): C231, H256, and E260. The 'KMSKS' region signature appears at 296 to 300 (KMSKS). K299 lines the ATP pocket.

The protein belongs to the class-I aminoacyl-tRNA synthetase family. In terms of assembly, monomer. Zn(2+) serves as cofactor.

Its subcellular location is the cytoplasm. The catalysed reaction is tRNA(Cys) + L-cysteine + ATP = L-cysteinyl-tRNA(Cys) + AMP + diphosphate. This Novosphingobium aromaticivorans (strain ATCC 700278 / DSM 12444 / CCUG 56034 / CIP 105152 / NBRC 16084 / F199) protein is Cysteine--tRNA ligase.